The sequence spans 469 residues: Glutamate--tRNA ligase (469 aa).

The short motif at 11–21 (PSPTGFIHLGN) is the 'HIGH' region element. Residues 243-247 (KMSKR) carry the 'KMSKS' region motif. Lys246 is a binding site for ATP.

The protein belongs to the class-I aminoacyl-tRNA synthetase family. Glutamate--tRNA ligase type 1 subfamily. Monomer.

The protein resides in the cytoplasm. The enzyme catalyses tRNA(Glu) + L-glutamate + ATP = L-glutamyl-tRNA(Glu) + AMP + diphosphate. In terms of biological role, catalyzes the attachment of glutamate to tRNA(Glu) in a two-step reaction: glutamate is first activated by ATP to form Glu-AMP and then transferred to the acceptor end of tRNA(Glu). This is Glutamate--tRNA ligase from Burkholderia orbicola (strain AU 1054).